We begin with the raw amino-acid sequence, 123 residues long: Large ribosomal subunit protein uL29 (123 aa).

The protein belongs to the universal ribosomal protein uL29 family. In terms of assembly, component of the large ribosomal subunit.

Its subcellular location is the cytoplasm. In terms of biological role, component of the large ribosomal subunit. The ribosome is a large ribonucleoprotein complex responsible for the synthesis of proteins in the cell. The protein is Large ribosomal subunit protein uL29 (rpl35) of Ictalurus punctatus (Channel catfish).